Reading from the N-terminus, the 198-residue chain is Recombination protein RecR (198 aa).

The C4-type zinc-finger motif lies at 57 to 72 (CSICGNITEEDPCEIC). Residues 80–175 (SIILVVEEPK…TVTRLAHGLS (96 aa)) form the Toprim domain.

This sequence belongs to the RecR family.

Functionally, may play a role in DNA repair. It seems to be involved in an RecBC-independent recombinational process of DNA repair. It may act with RecF and RecO. This is Recombination protein RecR from Enterococcus faecalis (strain ATCC 700802 / V583).